Consider the following 145-residue polypeptide: Ribonuclease H (145 aa).

Residues 1 to 142 form the RNase H type-1 domain; it reads MDTPVYLYTD…ADDLANRGAA (142 aa). Residues Asp-10, Glu-48, Asp-70, and Asp-134 each coordinate Mg(2+).

This sequence belongs to the RNase H family. As to quaternary structure, monomer. Mg(2+) is required as a cofactor.

It localises to the cytoplasm. The catalysed reaction is Endonucleolytic cleavage to 5'-phosphomonoester.. In terms of biological role, endonuclease that specifically degrades the RNA of RNA-DNA hybrids. This chain is Ribonuclease H, found in Neisseria meningitidis serogroup C / serotype 2a (strain ATCC 700532 / DSM 15464 / FAM18).